Consider the following 24-residue polypeptide: FLPILASLAATLGPKLLCLITKKC.

Cysteines 18 and 24 form a disulfide.

In terms of tissue distribution, expressed by the skin glands.

The protein resides in the secreted. Its function is as follows. Antibacterial activity against Gram-positive bacterium S.aureus. Weak antifungal activity against C.albicans. The chain is Brevinin-1BYc from Rana boylii (Foothill yellow-legged frog).